Consider the following 525-residue polypeptide: Protein disulfide-isomerase A2 (525 aa).

Residues 1–21 (MSCQLLPVLLLLLLRASCPWG) form the signal peptide. Residues 27–152 (RSPSEEPPEE…IAEWLRRRVG (126 aa)) form the Thioredoxin 1 domain. Residues C71 and C74 each act as nucleophile in the active site. The cysteines at positions 71 and 74 are disulfide-linked. 2 N-linked (GlcNAc...) asparagine glycosylation sites follow: N127 and N284. One can recognise a Thioredoxin 2 domain in the interval 367 to 496 (VLNGQVKPYL…FSKFLDNGGV (130 aa)). Active-site nucleophile residues include C418 and C421. C418 and C421 are joined by a disulfide. Positions 498 to 525 (PTEEPLEEPAAPFPEPPANSTMGSKEEL) are disordered. An N-linked (GlcNAc...) asparagine glycan is attached at N516. A compositionally biased stretch (polar residues) spans 516–525 (NSTMGSKEEL). The Prevents secretion from ER motif lies at 522–525 (KEEL).

The protein belongs to the protein disulfide isomerase family. As to quaternary structure, monomer; predominantly as monomer under reducing conditions. Homodimer; disulfide-linked. Part of a large chaperone multiprotein complex comprising DNAJB11, HSP90B1, HSPA5, HYOU, PDIA2, PDIA4, PDIA6, PPIB, SDF2L1, UGGT1 and very small amounts of ERP29, but not, or at very low levels, CALR nor CANX. Post-translationally, the disulfide-linked homodimer exhibits an enhanced chaperone activity. Glycosylated.

It localises to the endoplasmic reticulum lumen. The enzyme catalyses Catalyzes the rearrangement of -S-S- bonds in proteins.. In terms of biological role, acts as an intracellular estrogen-binding protein. May be involved in modulating cellular levels and biological functions of estrogens in the pancreas. May act as a chaperone that inhibits aggregation of misfolded proteins. This is Protein disulfide-isomerase A2 (PDIA2) from Pongo abelii (Sumatran orangutan).